Consider the following 299-residue polypeptide: Bifunctional protein FolD (299 aa).

Residues 168 to 170 (GRS), S193, and I234 each bind NADP(+).

It belongs to the tetrahydrofolate dehydrogenase/cyclohydrolase family. Homodimer.

It catalyses the reaction (6R)-5,10-methylene-5,6,7,8-tetrahydrofolate + NADP(+) = (6R)-5,10-methenyltetrahydrofolate + NADPH. The catalysed reaction is (6R)-5,10-methenyltetrahydrofolate + H2O = (6R)-10-formyltetrahydrofolate + H(+). It participates in one-carbon metabolism; tetrahydrofolate interconversion. Its function is as follows. Catalyzes the oxidation of 5,10-methylenetetrahydrofolate to 5,10-methenyltetrahydrofolate and then the hydrolysis of 5,10-methenyltetrahydrofolate to 10-formyltetrahydrofolate. The chain is Bifunctional protein FolD from Brucella anthropi (strain ATCC 49188 / DSM 6882 / CCUG 24695 / JCM 21032 / LMG 3331 / NBRC 15819 / NCTC 12168 / Alc 37) (Ochrobactrum anthropi).